Here is a 278-residue protein sequence, read N- to C-terminus: Probable cytochrome c oxidase subunit 3 (278 aa).

The next 6 helical transmembrane spans lie at 21 to 41 (PWPILTSFALLLLVIGGISSM), 46 to 66 (FNMYILSAGVISVIYCLYSWW), 89 to 109 (IGMVLFILTETVFFSVFFASF), 174 to 194 (CVTALAFTIVLGIFFTLMQVY), 212 to 232 (FYLATGFHGAHVVIGTIFLIV), and 256 to 276 (AWYWHFVDVVWLFLFTFVYIL).

Belongs to the cytochrome c oxidase subunit 3 family.

The protein localises to the cell membrane. The enzyme catalyses 4 Fe(II)-[cytochrome c] + O2 + 8 H(+)(in) = 4 Fe(III)-[cytochrome c] + 2 H2O + 4 H(+)(out). The polypeptide is Probable cytochrome c oxidase subunit 3 (ctaE) (Rickettsia prowazekii (strain Madrid E)).